Here is a 349-residue protein sequence, read N- to C-terminus: Phosphoribosylformylglycinamidine cyclo-ligase (349 aa).

The protein belongs to the AIR synthase family.

The protein localises to the cytoplasm. The catalysed reaction is 2-formamido-N(1)-(5-O-phospho-beta-D-ribosyl)acetamidine + ATP = 5-amino-1-(5-phospho-beta-D-ribosyl)imidazole + ADP + phosphate + H(+). The protein operates within purine metabolism; IMP biosynthesis via de novo pathway; 5-amino-1-(5-phospho-D-ribosyl)imidazole from N(2)-formyl-N(1)-(5-phospho-D-ribosyl)glycinamide: step 2/2. In Methanococcus maripaludis (strain C7 / ATCC BAA-1331), this protein is Phosphoribosylformylglycinamidine cyclo-ligase.